The following is a 505-amino-acid chain: Beta-glucosidase 18 (505 aa).

Positions 1 to 26 (MAGGSKTRIHASLVSTLLLLLPLASA) are cleaved as a signal peptide. Gln-46 is a binding site for a beta-D-glucoside. Asn-55 is a glycosylation site (N-linked (GlcNAc...) asparagine). Residues His-148 and 193–194 (NE) contribute to the a beta-D-glucoside site. The Proton donor role is filled by Glu-194. Cys-213 and Cys-220 are oxidised to a cystine. A beta-D-glucoside is bound at residue Tyr-337. Residues Cys-345 and Cys-350 are joined by a disulfide bond. A beta-D-glucoside-binding positions include Glu-408, Trp-457, 464–465 (EW), and Phe-473. The Nucleophile role is filled by Glu-408.

It belongs to the glycosyl hydrolase 1 family. In terms of tissue distribution, expressed in roots, leaves, flowers and pollen.

It carries out the reaction Hydrolysis of terminal, non-reducing beta-D-glucosyl residues with release of beta-D-glucose.. Hydrolyzes glycosides and monolignol glucosides. Can hydrolyze para-nitrophenyl beta-D-glucopyranoside (pNPGlc) in vitro. Hydrolyzes para-nitrophenyl beta-D-fucopyranoside, para-nitrophenyl beta-D-galactopyranoside and para-nitrophenyl beta-D-xylopyranoside in vitro. Hydrolyzes the monolignol glucosides coniferin and syringin with high catalytic efficiencies. The polypeptide is Beta-glucosidase 18 (Oryza sativa subsp. japonica (Rice)).